The primary structure comprises 960 residues: Ran GTPase-activating protein 2 (960 aa).

LRR repeat units follow at residues 69-92 (HLNL…LIAE), 132-156 (GCRL…LYNF), 162-185 (LYSL…VGKA), 227-254 (LGTL…AFRM), and 313-340 (RDCL…CFNS). Residues 370–408 (NIDFGRRGDDELLSSDEEEEQGAEDASMEEDAFNTSRET) form a disordered region. The span at 380–401 (ELLSSDEEEEQGAEDASMEEDA) shows a compositional bias: acidic residues. LRR repeat units follow at residues 475–498 (ASSM…VIAK), 538–561 (GCKI…ALKD), 568–595 (SFSL…LTEC), and 663–685 (NRNL…KALA). The disordered stretch occupies residues 777-819 (PENVNVGDEDDDLGSLDGDQEEYNSKSSDSEDADLDDDDEDDD). 2 stretches are compositionally biased toward acidic residues: residues 783 to 798 (GDED…DQEE) and 806 to 819 (SEDA…EDDD).

It localises to the nucleus. Functionally, GTPase system comprising ran-1, ran-2 and ran-3 is essential in nucleocytoplasmic trafficking. Ran-2 is a GTPase activator for the nuclear RAS-related regulatory protein Ran, converting it to the putatively inactive GDP-bound state. Required for correct chromosome alignment and segregation on the metaphase plate. The chain is Ran GTPase-activating protein 2 (ran-2) from Caenorhabditis elegans.